A 428-amino-acid polypeptide reads, in one-letter code: Enolase (428 aa).

Q162 contacts (2R)-2-phosphoglycerate. The active-site Proton donor is the E204. The Mg(2+) site is built by D241, E283, and D310. (2R)-2-phosphoglycerate-binding residues include K335, R364, S365, and K386. The Proton acceptor role is filled by K335.

It belongs to the enolase family. It depends on Mg(2+) as a cofactor.

It is found in the cytoplasm. It localises to the secreted. The protein resides in the cell surface. It catalyses the reaction (2R)-2-phosphoglycerate = phosphoenolpyruvate + H2O. The protein operates within carbohydrate degradation; glycolysis; pyruvate from D-glyceraldehyde 3-phosphate: step 4/5. Functionally, catalyzes the reversible conversion of 2-phosphoglycerate (2-PG) into phosphoenolpyruvate (PEP). It is essential for the degradation of carbohydrates via glycolysis. This chain is Enolase, found in Rhodococcus jostii (strain RHA1).